Here is a 643-residue protein sequence, read N- to C-terminus: Zinc finger protein 64 (643 aa).

11 C2H2-type zinc fingers span residues 173-195 (HKCEVCGKCFSRKDKLKTHMRCH), 201-223 (YKCKTCDYAAADSSSLNKHLRIH), 229-251 (FKCQICPYASRNSSQLTVHLRSH), 297-322 (FNCRYPGCHFKTVHGMKDLDRHLRIH), 328-350 (HKCEFCDKCFSRKDNLTMHMRCH), 356-378 (HKCHLCDYAAVDSSSLKKHLRIH), 384-406 (YKCQLCPYASRNSSQLTVHLRSH), 412-434 (FQCWLCSAKFKISSDLKRHMIVH), 440-463 (FKCEFCDVRCTMKANLKSHIRIKH), 465-487 (FKCLHCAFQGRDRADLLEHSRLH), and 493-515 (EKCPECSYSCSNPAALRVHSRVH). Residues Cys-495, Cys-498, His-511, His-515, Cys-523, Cys-526, His-539, and His-544 each coordinate Zn(2+). Basic and acidic residues predominate over residues 538–552 (KHIDKVHREGAKTEN). Residues 538–571 (KHIDKVHREGAKTENRAPPGKDGPGESGPHHVPN) form a disordered region. The C2H2-type 12 zinc-finger motif lies at 578–600 (FGCDKCGASFVRDDSLRCHRKQH).

Belongs to the krueppel C2H2-type zinc-finger protein family. As to quaternary structure, interacts with NOTCH1. Widely expressed. Expressed in the brain, spleen, liver, and heart.

The protein localises to the nucleus. In terms of biological role, may be involved in the regulation of mesenchymal cell differentiation through transactivation of NOTCH1 target genes. The polypeptide is Zinc finger protein 64 (Mus musculus (Mouse)).